The following is a 428-amino-acid chain: Adenylosuccinate synthetase (428 aa).

GTP is bound by residues 12-18 and 40-42; these read GDEGKGK and GHT. Asp-13 serves as the catalytic Proton acceptor. Mg(2+)-binding residues include Asp-13 and Gly-40. IMP contacts are provided by residues 13–16, 38–41, Thr-128, Arg-142, Gln-223, Thr-238, and Arg-302; these read DEGK and NAGH. His-41 (proton donor) is an active-site residue. Residue 298 to 304 participates in substrate binding; sequence TTTGRPR. GTP is bound by residues Arg-304, 330 to 332, and 412 to 414; these read SID and SVG.

It belongs to the adenylosuccinate synthetase family. As to quaternary structure, homodimer. Requires Mg(2+) as cofactor.

It is found in the cytoplasm. It catalyses the reaction IMP + L-aspartate + GTP = N(6)-(1,2-dicarboxyethyl)-AMP + GDP + phosphate + 2 H(+). It participates in purine metabolism; AMP biosynthesis via de novo pathway; AMP from IMP: step 1/2. Plays an important role in the de novo pathway of purine nucleotide biosynthesis. Catalyzes the first committed step in the biosynthesis of AMP from IMP. The polypeptide is Adenylosuccinate synthetase (Geobacillus kaustophilus (strain HTA426)).